Reading from the N-terminus, the 330-residue chain is Protein LEG1 homolog (330 aa).

Residues 1 to 20 (MAFLPSWVCVLVGSFSASLA) form the signal peptide. N24 and N69 each carry an N-linked (GlcNAc...) asparagine glycan.

It belongs to the LEG1 family. As to expression, detected in saliva and in hypomineralized dental enamel (at protein level).

Its subcellular location is the secreted. Its function is as follows. May be involved in early liver development. This is Protein LEG1 homolog from Homo sapiens (Human).